A 289-amino-acid chain; its full sequence is NFIL3 like protein (289 aa).

The segment at 1–27 (MDVGFSGLPDVSQSHSKTLWGARGRGP) is disordered. Positions 42-105 (DTVYWEKRRK…GLLPLTGGPR (64 aa)) constitute a bZIP domain. The segment at 48-64 (KRRKNNEAAKRSREKRR) is basic motif. Residues 70–91 (IEGRLAALMEENALLKGELKAL) form a leucine-zipper region.

Belongs to the bZIP family. NFIL3 subfamily.

The protein localises to the nucleus. This chain is NFIL3 like protein, found in Homo sapiens (Human).